A 564-amino-acid chain; its full sequence is Copine-8 (564 aa).

C2 domains are found at residues 1–133 (MDSR…RLEK) and 142–265 (KCGT…FNVY). 12 residues coordinate Ca(2+): aspartate 39, aspartate 45, aspartate 99, aspartate 101, serine 104, lysine 109, aspartate 111, aspartate 173, aspartate 179, aspartate 235, aspartate 237, and aspartate 243. A Phosphoserine modification is found at serine 260. The VWFA domain maps to 309–510 (NFTVAIDFTA…VQFVPFRDYI (202 aa)).

This sequence belongs to the copine family. Requires Ca(2+) as cofactor.

Its function is as follows. Probable calcium-dependent phospholipid-binding protein that may play a role in calcium-mediated intracellular processes. The polypeptide is Copine-8 (Homo sapiens (Human)).